A 908-amino-acid polypeptide reads, in one-letter code: NADH-quinone oxidoreductase subunit G (908 aa).

A 2Fe-2S ferredoxin-type domain is found at 2–83; sequence ATIHVDGKEY…GTFISIDDEE (82 aa). [2Fe-2S] cluster-binding residues include Cys34, Cys45, Cys48, and Cys67. The 4Fe-4S His(Cys)3-ligated-type domain occupies 83–122; that stretch reads EAKQFRESVVEWLMTNHPHDCPVCEEGGNCHLQDMTVMTG. Residues His99, Cys103, Cys106, Cys112, Cys151, Cys154, Cys157, Cys201, Cys228, Cys231, Cys235, and Cys263 each contribute to the [4Fe-4S] cluster site. Residues 221–277 form the 4Fe-4S Mo/W bis-MGD-type domain; sequence MQFAPSICQQCSIGCNISPGERYGELRRIENRYNGTVNHYFLCDRGRFGYGYVNLKD.

It belongs to the complex I 75 kDa subunit family. Composed of 13 different subunits. Subunits NuoCD, E, F, and G constitute the peripheral sector of the complex. [2Fe-2S] cluster serves as cofactor. It depends on [4Fe-4S] cluster as a cofactor.

The enzyme catalyses a quinone + NADH + 5 H(+)(in) = a quinol + NAD(+) + 4 H(+)(out). Its function is as follows. NDH-1 shuttles electrons from NADH, via FMN and iron-sulfur (Fe-S) centers, to quinones in the respiratory chain. The immediate electron acceptor for the enzyme in this species is believed to be ubiquinone. Couples the redox reaction to proton translocation (for every two electrons transferred, four hydrogen ions are translocated across the cytoplasmic membrane), and thus conserves the redox energy in a proton gradient. The protein is NADH-quinone oxidoreductase subunit G (nuoG) of Escherichia coli O157:H7.